A 607-amino-acid chain; its full sequence is tRNA-dihydrouridine(47) synthase [NAD(P)(+)] (607 aa).

The segment at alanine 27–serine 88 is disordered. Basic and acidic residues-rich tracts occupy residues alanine 42–glycine 63 and lysine 72–arginine 84. C3H1-type zinc fingers lie at residues glutamate 81–threonine 112 and valine 125–aspartate 150. FMN is bound by residues proline 245 to threonine 247 and glutamine 300. Residue cysteine 332 is the Proton donor of the active site. Residues lysine 372, histidine 403, asparagine 451–aspartate 453, and alanine 475–arginine 476 each bind FMN.

This sequence belongs to the Dus family. Dus3 subfamily. FMN serves as cofactor.

It is found in the cytoplasm. It localises to the nucleus. It catalyses the reaction 5,6-dihydrouridine(47) in tRNA + NAD(+) = uridine(47) in tRNA + NADH + H(+). It carries out the reaction 5,6-dihydrouridine(47) in tRNA + NADP(+) = uridine(47) in tRNA + NADPH + H(+). The catalysed reaction is a 5,6-dihydrouridine in mRNA + NAD(+) = a uridine in mRNA + NADH + H(+). The enzyme catalyses a 5,6-dihydrouridine in mRNA + NADP(+) = a uridine in mRNA + NADPH + H(+). Catalyzes the synthesis of dihydrouridine, a modified base found in the D-loop of most tRNAs. Specifically modifies U47 in cytoplasmic tRNAs. Catalyzes the synthesis of dihydrouridine in some mRNAs, thereby affecting their translation. This Meyerozyma guilliermondii (strain ATCC 6260 / CBS 566 / DSM 6381 / JCM 1539 / NBRC 10279 / NRRL Y-324) (Yeast) protein is tRNA-dihydrouridine(47) synthase [NAD(P)(+)] (DUS3).